Consider the following 601-residue polypeptide: Elongation factor 4 (601 aa).

Residues 5–187 (ENIRNFCIVA…AIITTFPPPK (183 aa)) form the tr-type G domain. GTP-binding positions include 17–22 (DHGKST) and 134–137 (NKID).

It belongs to the TRAFAC class translation factor GTPase superfamily. Classic translation factor GTPase family. LepA subfamily.

Its subcellular location is the cell inner membrane. It catalyses the reaction GTP + H2O = GDP + phosphate + H(+). Its function is as follows. Required for accurate and efficient protein synthesis under certain stress conditions. May act as a fidelity factor of the translation reaction, by catalyzing a one-codon backward translocation of tRNAs on improperly translocated ribosomes. Back-translocation proceeds from a post-translocation (POST) complex to a pre-translocation (PRE) complex, thus giving elongation factor G a second chance to translocate the tRNAs correctly. Binds to ribosomes in a GTP-dependent manner. The polypeptide is Elongation factor 4 (Treponema denticola (strain ATCC 35405 / DSM 14222 / CIP 103919 / JCM 8153 / KCTC 15104)).